The sequence spans 344 residues: MKRRRSAKKSPAMVTVTDWKGLDCGEETRIVRRLMKFEDLPEYLKDNEFIHNHYRCQWSLKDTFLSAFSWHNETLNIWTHLIGFGIFLWMTVVSCLETTEISLAGVFNGMAGVRICLSSNQTLLHDSNVTHHISCLTSQGEAIPKWPWLVYLVGAMGCLICSSVSHLLACHSKRFNVFFWRLDYAGISLMIVASFFAPIYYAFSCHPNFRLLYLSSISILGLLAIITLLSPALSTPRFRPFRANLFLAMGSSAVIPATHVLCLYWDHPNVFIALGYEIATALSYFVGATFYVSRVPERWKPGAFDMAGHSHQIFHVFVVMGALAHCVTTLLIIDFSRASPSCGF.

Topologically, residues methionine 1–asparagine 76 are cytoplasmic. A helical membrane pass occupies residues isoleucine 77–glutamate 97. Over threonine 98–proline 147 the chain is Extracellular. The chain crosses the membrane as a helical span at residues tryptophan 148–leucine 168. Over alanine 169–tyrosine 184 the chain is Cytoplasmic. A helical membrane pass occupies residues alanine 185–cysteine 205. The Extracellular segment spans residues histidine 206–arginine 210. Residues leucine 211–proline 231 traverse the membrane as a helical segment. The Cytoplasmic portion of the chain corresponds to alanine 232–asparagine 244. The helical transmembrane segment at leucine 245–tryptophan 265 threads the bilayer. At aspartate 266–asparagine 269 the chain is on the extracellular side. The helical transmembrane segment at valine 270–phenylalanine 290 threads the bilayer. Over tyrosine 291 to glutamine 312 the chain is Cytoplasmic. A helical transmembrane segment spans residues isoleucine 313–isoleucine 333. The Extracellular segment spans residues aspartate 334 to phenylalanine 344.

It belongs to the ADIPOR family. In terms of tissue distribution, expressed in roots and flowers.

It localises to the membrane. In terms of biological role, may play a role in abiotic stress response. In Arabidopsis thaliana (Mouse-ear cress), this protein is Heptahelical transmembrane protein 3 (HHP3).